The primary structure comprises 71 residues: Large ribosomal subunit protein bL31 (71 aa).

Cysteine 16, cysteine 18, cysteine 37, and cysteine 40 together coordinate Zn(2+).

This sequence belongs to the bacterial ribosomal protein bL31 family. Type A subfamily. Part of the 50S ribosomal subunit. The cofactor is Zn(2+).

Binds the 23S rRNA. This chain is Large ribosomal subunit protein bL31, found in Wigglesworthia glossinidia brevipalpis.